The chain runs to 117 residues: Non-specific lipid-transfer protein B (117 aa).

A signal peptide spans 1 to 25 (MAGLVKLSCLVLACMIVAGPIATNA). 4 cysteine pairs are disulfide-bonded: C29–C76, C39–C53, C54–C99, and C74–C113.

Belongs to the plant LTP family.

Plant non-specific lipid-transfer proteins transfer phospholipids as well as galactolipids across membranes. May play a role in wax or cutin deposition in the cell walls of expanding epidermal cells and certain secretory tissues. The chain is Non-specific lipid-transfer protein B (WAX9B) from Brassica oleracea var. italica (Broccoli).